Here is a 239-residue protein sequence, read N- to C-terminus: Fatty acid metabolism regulator protein (239 aa).

In terms of domain architecture, HTH gntR-type spans 6–74 (QSPAGFAEEY…HGKPTKINNF (69 aa)). The H-T-H motif DNA-binding region spans 34–53 (ERELSELIGVTRTTLREVLQ).

In terms of assembly, homodimer.

The protein resides in the cytoplasm. In terms of biological role, multifunctional regulator of fatty acid metabolism. In Pectobacterium atrosepticum (strain SCRI 1043 / ATCC BAA-672) (Erwinia carotovora subsp. atroseptica), this protein is Fatty acid metabolism regulator protein.